The chain runs to 259 residues: Ribonuclease PH (259 aa).

Residues arginine 88 and 126 to 128 each bind phosphate; that span reads GTR.

Belongs to the RNase PH family. As to quaternary structure, homohexameric ring arranged as a trimer of dimers.

The catalysed reaction is tRNA(n+1) + phosphate = tRNA(n) + a ribonucleoside 5'-diphosphate. Phosphorolytic 3'-5' exoribonuclease that plays an important role in tRNA 3'-end maturation. Removes nucleotide residues following the 3'-CCA terminus of tRNAs; can also add nucleotides to the ends of RNA molecules by using nucleoside diphosphates as substrates, but this may not be physiologically important. Probably plays a role in initiation of 16S rRNA degradation (leading to ribosome degradation) during starvation. The protein is Ribonuclease PH of Mycobacterium leprae (strain Br4923).